The sequence spans 407 residues: MSGRHRKPTTSNVSVAKIAFTGAVLGGGGIAMAAQATAATDGEWDQVARCESGGNWSINTGNGYLGGLQFTQSTWAAHGGGEFAPSAQLASREQQIAVGERVLATQGRGAWPVCGRGLSNATPREVLPASAAMDAPLDAAAVNGEPAPLAPPPADPAPPVELAANDLPAPLGEPLPAAPADPAPPADLAPPAPADVAPPVELAVNDLPAPLGEPLPAAPADPAPPADLAPPAPADLAPPAPADLAPPAPADLAPPVELAVNDLPAPLGEPLPAAPAELAPPADLAPASADLAPPAPADLAPPAPAELAPPAPADLAPPAAVNEQTAPGDQPATAPGGPVGLATDLELPEPDPQPADAPPPGDVTEAPAETPQVSNIAYTKKLWQAIRAQDVCGNDALDSLAQPYVIG.

An N-terminal signal peptide occupies residues 1 to 33 (MSGRHRKPTTSNVSVAKIAFTGAVLGGGGIAMA). Disordered stretches follow at residues 142-253 (VNGE…ADLA) and 271-371 (LPAA…AETP). The span at 148–159 (PLAPPPADPAPP) shows a compositional bias: pro residues. The span at 160–170 (VELAANDLPAP) shows a compositional bias: low complexity. Residues 171-193 (LGEPLPAAPADPAPPADLAPPAP) are compositionally biased toward pro residues. Tandem repeats lie at residues 178 to 185 (APADPAPP) and 186 to 193 (ADLAPPAP). Residues 178-359 (APADPAPPAD…PDPQPADAPP (182 aa)) are 12 X 8 AA approximate repeats of A-P-A-D-L-A-P-P. Over residues 194-210 (ADVAPPVELAVNDLPAP) the composition is skewed to low complexity. Residues 211–249 (LGEPLPAAPADPAPPADLAPPAPADLAPPAPADLAPPAP) show a composition bias toward pro residues. 10 tandem repeats follow at residues 218–225 (APADPAPP), 226–233 (ADLAPPAP), 240–247 (APADLAPP), 248–255 (APADLAPP), 274–281 (APAELAPP), 287–294 (ASADLAPP), 295–302 (APADLAPP), 303–310 (APAELAPP), 311–318 (APADLAPP), and 353–359 (QPADAPP). Low complexity predominate over residues 274-292 (APAELAPPADLAPASADLA). Composition is skewed to pro residues over residues 293 to 312 (PPAPADLAPPAPAELAPPAP) and 350 to 361 (PDPQPADAPPPG).

It belongs to the transglycosylase family. Rpf subfamily.

Its function is as follows. Factor that stimulates resuscitation of dormant cells. Has peptidoglycan (PG) hydrolytic activity. This Mycobacterium tuberculosis (strain CDC 1551 / Oshkosh) protein is Resuscitation-promoting factor RpfA (rpfA).